Here is a 516-residue protein sequence, read N- to C-terminus: Solute carrier family 49 member A3 (516 aa).

The segment covering 1–10 (MAGTMDRLED) has biased composition (basic and acidic residues). Residues 1–22 (MAGTMDRLEDCNSPETSGTAGD) form a disordered region. 12 helical membrane passes run 34-54 (WVFLLVVSLLSCSNAMLWLSF), 74-94 (WLSLIYFVLSIPFGMAAIWVL), 104-124 (ILGAWLNFSGSVLRAVPCLPV), 139-159 (LCALAQTLVVSSPAKLAALWF), 170-190 (ISTMSNPLGLLIANVLSPALV), 199-219 (MLGIYIGPAALACLLATVCLW), 253-273 (VLLAVCFGGGIGVFSSFSALL), 289-309 (LCGALFIVFGILGALLLGLYV), 321-341 (IGLCLTSMTSVAFALVSQLQG), 344-364 (LALAAICSLFGLFGFSVAPVV), 382-402 (GLIFVLGQAEGMLIMLLLTAL), and 425-445 (VSLLLLAGLCTLFTCVLVIFF). The segment at 453 to 516 (EAESGGSSSP…EWAETMPRDV (64 aa)) is disordered. Residues 504–516 (GHSEWAETMPRDV) are compositionally biased toward basic and acidic residues.

It belongs to the major facilitator superfamily.

It localises to the membrane. This chain is Solute carrier family 49 member A3 (Slc49a3), found in Mus musculus (Mouse).